Consider the following 130-residue polypeptide: MMRQSLQAVLPEISGNKTSLLRKSVCSDLLTLFNSPHSALPSLLVSGMPEWQVHNPSDKHLQSWYCRQLRSALLFHEPRIAALQVNLKEAYCHTLAISLEIMLYHDDEPLTFDLVWDNGGWRSATLENVS.

It belongs to the GpW/Gp25 family. IraD subfamily. In terms of assembly, interacts with RssB.

It localises to the cytoplasm. Inhibits RpoS proteolysis by regulating RssB activity, thereby increasing the stability of the sigma stress factor RpoS during oxidative stress. Its effect on RpoS stability is due to its interaction with RssB, which probably blocks the interaction of RssB with RpoS, and the consequent delivery of the RssB-RpoS complex to the ClpXP protein degradation pathway. The chain is Anti-adapter protein IraD from Shigella boydii serotype 4 (strain Sb227).